The primary structure comprises 301 residues: Putative MgpC-like protein MPN_093 (301 aa).

The protein belongs to the MgpC family.

This Mycoplasma pneumoniae (strain ATCC 29342 / M129 / Subtype 1) (Mycoplasmoides pneumoniae) protein is Putative MgpC-like protein MPN_093.